A 235-amino-acid chain; its full sequence is Proteasome subunit alpha (235 aa).

This sequence belongs to the peptidase T1A family. As to quaternary structure, the 20S proteasome core is composed of 14 alpha and 14 beta subunits that assemble into four stacked heptameric rings, resulting in a barrel-shaped structure. The two inner rings, each composed of seven catalytic beta subunits, are sandwiched by two outer rings, each composed of seven alpha subunits. The catalytic chamber with the active sites is on the inside of the barrel. Has a gated structure, the ends of the cylinder being occluded by the N-termini of the alpha-subunits. Is capped by the proteasome-associated ATPase, ARC.

The protein resides in the cytoplasm. Its pathway is protein degradation; proteasomal Pup-dependent pathway. With respect to regulation, the formation of the proteasomal ATPase ARC-20S proteasome complex, likely via the docking of the C-termini of ARC into the intersubunit pockets in the alpha-rings, may trigger opening of the gate for substrate entry. Interconversion between the open-gate and close-gate conformations leads to a dynamic regulation of the 20S proteasome proteolysis activity. Its function is as follows. Component of the proteasome core, a large protease complex with broad specificity involved in protein degradation. In Paenarthrobacter aurescens (strain TC1), this protein is Proteasome subunit alpha.